A 542-amino-acid polypeptide reads, in one-letter code: Cytochrome P450 monooxygenase TRI1 (542 aa).

Residues 37–54 form a helical membrane-spanning segment; it reads LIYFLCFVVLGRAVQWFL. Residues asparagine 167, asparagine 297, and asparagine 428 are each glycosylated (N-linked (GlcNAc...) asparagine). Cysteine 469 contacts heme.

The protein belongs to the cytochrome P450 family. It depends on heme as a cofactor.

It is found in the membrane. It participates in sesquiterpene biosynthesis; trichothecene biosynthesis. Functionally, cytochrome P450 monooxygenase; part of 2-gene cluster involved in trichothecene C-8 modification that mediates the biosynthesis of T2-toxin. The biosynthesis of trichothecenes begins with the cyclization of farnesyl diphosphate to trichodiene and is catalyzed by the trichodiene synthase TRI5. Trichodiene undergoes a series of oxygenations catalyzed by the cytochrome P450 monooxygenase TRI4. TRI4 controls the addition of four oxygens at C-2, C-3, C-11, and the C-12, C-13-epoxide to form the intermediate isotrichotriol. Isotrichotriol then undergoes a non-enzymatic isomerization and cyclization to form isotrichodermol. During this process, the oxygen at the C-2 position becomes the pyran ring oxygen and the hydroxyl group at C-11 is lost. More complex type A trichothecenes are built by modifying isotrichodermol through a series of paired hydroxylation and acetylation or acylation steps. Isotrichodermol is converted to isotrichodermin by the acetyltransferase TRI101. TRI101 encodes a C-3 transacetylase that acts as a self-protection or resistance factor during biosynthesis and that the presence of a free C-3 hydroxyl group is a key component of Fusarium trichothecene phytotoxicity. A second hydroxyl group is added to C-15 by the trichothecene C-15 hydroxylase TRI11, producing 15-decalonectrin, which is then acetylated by TRI3, producing calonectrin. A third hydroxyl group is added at C-4 by the cytochrome P450 monooxygenase TRI13, converting calonectrin to 3,15-diacetoxyspirpenol, which is subsequently acetylated by the acetyltransferase TRI7. A fourth hydroxyl group is added to C-8 by the cytochrome P450 monooxygenase TRI1, followed by the addition of an isovaleryl moiety by TRI16. Finally, the acetyl group is removed from the C-3 position by the trichothecene C-3 esterase TRI8 to produce T-2 toxin. The polypeptide is Cytochrome P450 monooxygenase TRI1 (Fusarium sporotrichioides).